A 139-amino-acid polypeptide reads, in one-letter code: Transcription factor E (139 aa).

The region spanning Ile7–Leu91 is the HTH TFE/IIEalpha-type domain.

It belongs to the TFE family. In terms of assembly, monomer. Interaction with RNA polymerase subunits RpoF and RpoE is necessary for Tfe stimulatory transcription activity. Able to interact with Tbp and RNA polymerase in the absence of DNA promoter. Interacts both with the preinitiation and elongation complexes.

Functionally, transcription factor that plays a role in the activation of archaeal genes transcribed by RNA polymerase. Facilitates transcription initiation by enhancing TATA-box recognition by TATA-box-binding protein (Tbp), and transcription factor B (Tfb) and RNA polymerase recruitment. Not absolutely required for transcription in vitro, but particularly important in cases where Tbp or Tfb function is not optimal. It dynamically alters the nucleic acid-binding properties of RNA polymerases by stabilizing the initiation complex and destabilizing elongation complexes. Seems to translocate with the RNA polymerase following initiation and acts by binding to the non template strand of the transcription bubble in elongation complexes. This Nanoarchaeum equitans (strain Kin4-M) protein is Transcription factor E.